A 398-amino-acid polypeptide reads, in one-letter code: Putative F-box protein At3g17620 (398 aa).

Residues 1–45 (MMSDLPRDLLEERLSRVPVKSLREARFTCKNWKTLSKKRSFTKKH) enclose the F-box domain.

In Arabidopsis thaliana (Mouse-ear cress), this protein is Putative F-box protein At3g17620.